Here is a 208-residue protein sequence, read N- to C-terminus: Thioesterase 1/protease 1/lysophospholipase L1 (208 aa).

The first 26 residues, Met1–Ala26, serve as a signal peptide directing secretion. Ser36 acts as the Nucleophile in catalysis. Residues Gly70 and Asn99 each contribute to the substrate site. Residues Asp180 and His183 contribute to the active site.

The protein belongs to the 'GDSL' lipolytic enzyme family. As to quaternary structure, monomer or homotetramer.

It localises to the periplasm. It carries out the reaction a fatty acyl-CoA + H2O = a fatty acid + CoA + H(+). The enzyme catalyses hexadecanoyl-CoA + H2O = hexadecanoate + CoA + H(+). It catalyses the reaction (9Z)-hexadecenoyl-CoA + H2O = (9Z)-hexadecenoate + CoA + H(+). The catalysed reaction is octadecanoyl-CoA + H2O = octadecanoate + CoA + H(+). It carries out the reaction (9Z)-octadecenoyl-CoA + H2O = (9Z)-octadecenoate + CoA + H(+). The enzyme catalyses (9Z)-octadecenoyl-[ACP] + H2O = (9Z)-octadecenoate + holo-[ACP] + H(+). It catalyses the reaction (11Z)-octadecenoyl-CoA + H2O = (11Z)-octadecenoate + CoA + H(+). The catalysed reaction is tetradecanoyl-CoA + H2O = tetradecanoate + CoA + H(+). It carries out the reaction (5Z,8Z,11Z,14Z)-eicosatetraenoyl-CoA + H2O = (5Z,8Z,11Z,14Z)-eicosatetraenoate + CoA + H(+). The enzyme catalyses dodecanoyl-CoA + H2O = dodecanoate + CoA + H(+). It catalyses the reaction decanoyl-CoA + H2O = decanoate + CoA + H(+). The catalysed reaction is hexanoyl-CoA + H2O = hexanoate + CoA + H(+). It carries out the reaction a 1-acyl-sn-glycero-3-phosphocholine + H2O = sn-glycerol 3-phosphocholine + a fatty acid + H(+). The enzyme catalyses a phenyl acetate + H2O = a phenol + acetate + H(+). It catalyses the reaction a butanoate ester + H2O = an aliphatic alcohol + butanoate + H(+). The catalysed reaction is a hexanoate ester + H2O = an aliphatic alcohol + hexanoate + H(+). It carries out the reaction an octanoate ester + H2O = an aliphatic alcohol + octanoate + H(+). In terms of biological role, tesA is a multifunctional esterase that can act as a thioesterase, arylesterase, lysophospholipase and protease. The polypeptide is Thioesterase 1/protease 1/lysophospholipase L1 (tesA) (Escherichia coli O6:H1 (strain CFT073 / ATCC 700928 / UPEC)).